Reading from the N-terminus, the 762-residue chain is MQNTRRCISLICVTRQPPSLRATYGAVAAARCLHRAPPQSSRKKHETNVSTLFKPVQVQANVDCEDVGSELVGKLEKSELLKILNKFTQRRETKSLCSENGLDSYLQQQAFGSFRRYCIEAENLPVDLHIIFSDIMQGAGHIDDIFPYFLRHAKTVFPHLDCMDDLKKISDLRQPANWYTNARALTRKIVFHSGPTNSGKTYHAMERYLSAKTGVYCGPLKLLATEVYNKANERGTPCDLVTGEERKFGISDNSPANHVACTVEMTSVNTPYEVAVIDEIQQIRDPQRGWAWTRAFLGLIADEVHVCGEAGALELLQKICETTGETVEVRRYDRLTELTVEDSALGSLDNVMPGDCIVCFSKHDIYTVSREIEARGKEVAVIYGGLPPGTKLAQAAKFNDPANSCKVMVATDAIGMGLNLSIRRIIFYSLVKPTMNERGEREIDTISVSSALQIAGRAGRFRTQWEHGYVTAFKSEDLQTLQRILAQTPEPLKQAGLHPTADQIELYAYHLPNSSLSNLMDIFVNLCTVDDSLYFMCNIEDFKFLAEMIQHVPLPLRARYVFCCAPINRKMPFVCSMFLKIARQYSRNEPITFEFIKSNCGWPFKLPKTILDLVHLESVFDVMDLYRFMDLFPEAGNVREAQKELDEIIQQGVFQITRLLKNTEASQEGETPNYSMRRVTHVKEPRLPSASRGRLTDRLLAQGLLTPGMLSELRKEWDAQQVGQAAAASTSSKESQESPPDDSDDEDSYPGSYKKTRRKRRK.

The N-terminal 36 residues, 1 to 36 (MQNTRRCISLICVTRQPPSLRATYGAVAAARCLHRA), are a transit peptide targeting the mitochondrion. The region spanning 181–321 (NARALTRKIV…ALELLQKICE (141 aa)) is the Helicase ATP-binding domain. Residue 194–201 (GPTNSGKT) participates in ATP binding. The Helicase C-terminal domain maps to 331–508 (RYDRLTELTV…PTADQIELYA (178 aa)). Residues 716–762 (EWDAQQVGQAAAASTSSKESQESPPDDSDDEDSYPGSYKKTRRKRRK) form a disordered region. Residues 721–730 (QVGQAAAAST) show a composition bias toward polar residues. Residues 739-748 (PPDDSDDEDS) show a composition bias toward acidic residues.

Belongs to the helicase family. Mg(2+) serves as cofactor. Requires Mn(2+) as cofactor.

Its subcellular location is the mitochondrion. The catalysed reaction is ATP + H2O = ADP + phosphate + H(+). In terms of biological role, major helicase player in mitochondrial RNA metabolism and maintenance. Likely component of the mitochondrial degradosome (mtEXO) complex, that degrades 3' overhang double-stranded RNA with a 3'-to-5' directionality in an ATP-dependent manner. ATPase and ATP-dependent multisubstrate helicase, able to unwind double-stranded (ds) DNA and RNA, and RNA/DNA heteroduplexes in the 5'-to-3' direction. Regulates mRNA stability and is required for the correct processing and maturation of mitochondrial transcripts. This chain is ATP-dependent RNA helicase SUV3 homolog, mitochondrial, found in Drosophila pseudoobscura pseudoobscura (Fruit fly).